Consider the following 198-residue polypeptide: MHEIYLIGLGNPGKKYYNSRHNIGFLLLEKLSKKYNSNFLLKDKLKSSCSEFQINNYTFRLFLPNTFMNNSGYAVRAIVDWYKVNLDQIFIIVDDKDLPLGKIRFRRKGSSGGHNGLKSIIEQLQSQNFKRIRIGIGSPPLIKGENNFNTISHVLGNISLEEKLILDKVFKRVIESLEHLNTKKEDHIINELNSFNQD.

Residue Tyr-16 coordinates tRNA. Catalysis depends on His-21, which acts as the Proton acceptor. TRNA is bound by residues Phe-67, Asn-69, and Asn-115.

Belongs to the PTH family. In terms of assembly, monomer.

Its subcellular location is the cytoplasm. The catalysed reaction is an N-acyl-L-alpha-aminoacyl-tRNA + H2O = an N-acyl-L-amino acid + a tRNA + H(+). Its function is as follows. Hydrolyzes ribosome-free peptidyl-tRNAs (with 1 or more amino acids incorporated), which drop off the ribosome during protein synthesis, or as a result of ribosome stalling. In terms of biological role, catalyzes the release of premature peptidyl moieties from peptidyl-tRNA molecules trapped in stalled 50S ribosomal subunits, and thus maintains levels of free tRNAs and 50S ribosomes. In Prochlorococcus marinus (strain MIT 9301), this protein is Peptidyl-tRNA hydrolase.